Here is a 938-residue protein sequence, read N- to C-terminus: Isoleucine--tRNA ligase (938 aa).

The short motif at 58–68 is the 'HIGH' region element; sequence PYANGNIHIGH. Residue E561 coordinates L-isoleucyl-5'-AMP. Positions 602 to 606 match the 'KMSKS' region motif; that stretch reads KMSKS. K605 contributes to the ATP binding site. 4 residues coordinate Zn(2+): C901, C904, C921, and C924.

The protein belongs to the class-I aminoacyl-tRNA synthetase family. IleS type 1 subfamily. Monomer. Zn(2+) serves as cofactor.

Its subcellular location is the cytoplasm. It carries out the reaction tRNA(Ile) + L-isoleucine + ATP = L-isoleucyl-tRNA(Ile) + AMP + diphosphate. Functionally, catalyzes the attachment of isoleucine to tRNA(Ile). As IleRS can inadvertently accommodate and process structurally similar amino acids such as valine, to avoid such errors it has two additional distinct tRNA(Ile)-dependent editing activities. One activity is designated as 'pretransfer' editing and involves the hydrolysis of activated Val-AMP. The other activity is designated 'posttransfer' editing and involves deacylation of mischarged Val-tRNA(Ile). This chain is Isoleucine--tRNA ligase, found in Yersinia pseudotuberculosis serotype O:1b (strain IP 31758).